The following is a 361-amino-acid chain: Phosphoserine aminotransferase (361 aa).

Residue arginine 43 coordinates L-glutamate. Pyridoxal 5'-phosphate-binding positions include 77-78 (AS), tryptophan 103, threonine 153, aspartate 173, and glutamine 196. Lysine 197 bears the N6-(pyridoxal phosphate)lysine mark. 238-239 (NT) contributes to the pyridoxal 5'-phosphate binding site.

This sequence belongs to the class-V pyridoxal-phosphate-dependent aminotransferase family. SerC subfamily. Homodimer. Requires pyridoxal 5'-phosphate as cofactor.

It is found in the cytoplasm. It carries out the reaction O-phospho-L-serine + 2-oxoglutarate = 3-phosphooxypyruvate + L-glutamate. The enzyme catalyses 4-(phosphooxy)-L-threonine + 2-oxoglutarate = (R)-3-hydroxy-2-oxo-4-phosphooxybutanoate + L-glutamate. It participates in amino-acid biosynthesis; L-serine biosynthesis; L-serine from 3-phospho-D-glycerate: step 2/3. Its pathway is cofactor biosynthesis; pyridoxine 5'-phosphate biosynthesis; pyridoxine 5'-phosphate from D-erythrose 4-phosphate: step 3/5. Catalyzes the reversible conversion of 3-phosphohydroxypyruvate to phosphoserine and of 3-hydroxy-2-oxo-4-phosphonooxybutanoate to phosphohydroxythreonine. This chain is Phosphoserine aminotransferase, found in Pseudomonas putida (strain ATCC 47054 / DSM 6125 / CFBP 8728 / NCIMB 11950 / KT2440).